The primary structure comprises 205 residues: Nuclear transcription factor Y subunit C-6 (205 aa).

Residues 1-24 (MEPKSTTPPPPPPPPVLGAPVPYP) are disordered.

The protein belongs to the NFYC/HAP5 subunit family. Heterotrimeric transcription factor composed of three components, NF-YA, NF-YB and NF-YC. NF-YB and NF-YC must interact and dimerize for NF-YA association and DNA binding. Interacts with NFYB2. Interacts with NFYB8, NFYB10 and HD5/NFYB11.

It localises to the nucleus. It is found in the cytoplasm. Its function is as follows. Component of the NF-Y/HAP transcription factor complex. The polypeptide is Nuclear transcription factor Y subunit C-6 (Oryza sativa subsp. japonica (Rice)).